The chain runs to 189 residues: Flavin prenyltransferase UbiX (189 aa).

FMN-binding positions include Gly11–Ser13, Ser37, Ser88–Thr91, and Arg123. Tyr153 serves as a coordination point for dimethylallyl phosphate.

This sequence belongs to the UbiX/PAD1 family.

It carries out the reaction dimethylallyl phosphate + FMNH2 = prenylated FMNH2 + phosphate. Functionally, flavin prenyltransferase that catalyzes the synthesis of the prenylated FMN cofactor (prenyl-FMN) for 4-hydroxy-3-polyprenylbenzoic acid decarboxylase UbiD. The prenyltransferase is metal-independent and links a dimethylallyl moiety from dimethylallyl monophosphate (DMAP) to the flavin N5 and C6 atoms of FMN. The sequence is that of Flavin prenyltransferase UbiX from Neisseria meningitidis serogroup B (strain ATCC BAA-335 / MC58).